The chain runs to 230 residues: MREERPIIALDFPSFDDVKAFLEHFPEDEKLFVKIGMEFFYAIGPEIVHYLKGLGHSIFLDLKLHDIPNTVRSAMSVLGTFGIDMVTVHAAGGVEMMSEAKKVLGDKAKLVAVTQLTSTSEEDMRDCQNIQTTVQESVVNYARKAKEAGLDGVVCSAQEVELIKAATAEDFLCVTPGIRPAGSEIGDQKRVMTPQEAHQIGSDYIVVGRPIIQAENPWDAYHEIKKQWNS.

Substrate is bound by residues Asp11, Lys34, 61–70 (DLKLHDIPNT), Thr117, Arg179, Gln188, Gly208, and Arg209. Residue Lys63 is the Proton donor of the active site.

This sequence belongs to the OMP decarboxylase family. Type 1 subfamily. As to quaternary structure, homodimer.

The catalysed reaction is orotidine 5'-phosphate + H(+) = UMP + CO2. Its pathway is pyrimidine metabolism; UMP biosynthesis via de novo pathway; UMP from orotate: step 2/2. Its function is as follows. Catalyzes the decarboxylation of orotidine 5'-monophosphate (OMP) to uridine 5'-monophosphate (UMP). The protein is Orotidine 5'-phosphate decarboxylase of Streptococcus gordonii (strain Challis / ATCC 35105 / BCRC 15272 / CH1 / DL1 / V288).